The sequence spans 267 residues: 27 kDa core protein (267 aa).

The protein belongs to the chordopoxvirinae D3 family.

The protein resides in the virion. Functionally, late protein which is part of a large complex required for early virion morphogenesis. This complex participates in the formation of virosomes and the incorporation of virosomal contents into nascent immature virions. The sequence is that of 27 kDa core protein from Canarypox virus (CNPV).